Consider the following 552-residue polypeptide: MSNAEHSSNFIRNIIIDDLDSKKHDTIITRFPPEPNGYLHIGHAKSIVLNFELGKEFNGRTNLRFDDTNPTKEDTEYVESIKEDVHWLGYNWSELHFASNYFDEMYKRALLLIKKGKAYVCDLTPEEIKEYRGTLTEPGKESPYRNRSVEENLDLFERMRKGEFEDGSKVLRAKIDMSSPNINFRDPIIYRIAHASHHNTGDKWCIYPMYDFAHPLEDAIEGITHSICTLEFADHRPLYDWFVKECEMESVPRQIEFARLNITNTVMSKRKLKQLVDEGIVDGWDDPRMPTVAGLRRRGYTPKSIRNFCKAIGVAKADSTVDSQMLEHFIREDLQETAPRAMAVINPLKLVITNYPEGESEILEIENNPKDESAGKRAVTFSREVYIEREDFMENPPKKYFRLFPGNEVRLKGAYFVKCNEVIKDENGEVTEIHCTYDPETKSGTGFTGRKVKGTIHWVDANNCIPAEFRLYEPLILDDCEENEGKHFLEQINPNSLTICKGFIEPSAKDAKPQDKYQLFRHGYFNVDPNFTSDDNLVFNRIVSLKSSFKLK.

Residues 33–43 carry the 'HIGH' region motif; that stretch reads PEPNGYLHIGH. ATP contacts are provided by residues 34–36 and 40–46; these read EPN and HIGHAKS. The L-glutamine site is built by aspartate 66 and tyrosine 210. ATP contacts are provided by residues threonine 229, 259–260, and 267–269; these read RL and MSK. Positions 266-270 match the 'KMSKS' region motif; it reads VMSKR.

Belongs to the class-I aminoacyl-tRNA synthetase family. As to quaternary structure, monomer.

The protein resides in the cytoplasm. It catalyses the reaction tRNA(Gln) + L-glutamine + ATP = L-glutaminyl-tRNA(Gln) + AMP + diphosphate. In Clostridium perfringens (strain ATCC 13124 / DSM 756 / JCM 1290 / NCIMB 6125 / NCTC 8237 / Type A), this protein is Glutamine--tRNA ligase.